A 373-amino-acid chain; its full sequence is Anhydro-N-acetylmuramic acid kinase (373 aa).

12-19 (GTSLDGVD) serves as a coordination point for ATP.

Belongs to the anhydro-N-acetylmuramic acid kinase family.

It carries out the reaction 1,6-anhydro-N-acetyl-beta-muramate + ATP + H2O = N-acetyl-D-muramate 6-phosphate + ADP + H(+). The protein operates within amino-sugar metabolism; 1,6-anhydro-N-acetylmuramate degradation. Its pathway is cell wall biogenesis; peptidoglycan recycling. Functionally, catalyzes the specific phosphorylation of 1,6-anhydro-N-acetylmuramic acid (anhMurNAc) with the simultaneous cleavage of the 1,6-anhydro ring, generating MurNAc-6-P. Is required for the utilization of anhMurNAc either imported from the medium or derived from its own cell wall murein, and thus plays a role in cell wall recycling. This Salmonella gallinarum (strain 287/91 / NCTC 13346) protein is Anhydro-N-acetylmuramic acid kinase.